Reading from the N-terminus, the 88-residue chain is Apolipoprotein C-I (88 aa).

The N-terminal stretch at 1-26 (MRLLISLPVLIVVLAMALEGPAPAQA) is a signal peptide.

This sequence belongs to the apolipoprotein C1 family.

Its subcellular location is the secreted. In terms of biological role, inhibitor of lipoprotein binding to the low density lipoprotein (LDL) receptor, LDL receptor-related protein, and very low density lipoprotein (VLDL) receptor. Associates with high density lipoproteins (HDL) and the triacylglycerol-rich lipoproteins in the plasma and makes up about 10% of the protein of the VLDL and 2% of that of HDL. Appears to interfere directly with fatty acid uptake and is also the major plasma inhibitor of cholesteryl ester transfer protein (CETP). Modulates the interaction of APOE with beta-migrating VLDL and inhibits binding of beta-VLDL to the LDL receptor-related protein. Binds free fatty acids and reduces their intracellular esterification. The chain is Apolipoprotein C-I (APOC1) from Mesocricetus auratus (Golden hamster).